The primary structure comprises 115 residues: Large ribosomal subunit protein uL24 (115 aa).

The protein belongs to the universal ribosomal protein uL24 family. As to quaternary structure, part of the 50S ribosomal subunit.

One of two assembly initiator proteins, it binds directly to the 5'-end of the 23S rRNA, where it nucleates assembly of the 50S subunit. In terms of biological role, one of the proteins that surrounds the polypeptide exit tunnel on the outside of the subunit. The chain is Large ribosomal subunit protein uL24 from Synechocystis sp. (strain ATCC 27184 / PCC 6803 / Kazusa).